Consider the following 251-residue polypeptide: uncharacterized protein (251 aa).

This is an uncharacterized protein from Homo sapiens (Human).